The chain runs to 402 residues: MKLSYLPSEFQKALPILEKIKAAGFEAYFVGGSVRDALLNRPIHDVDIASSSYPEETKQIFERTVDIGIEHGTVLVLENGGEYEVTTFRTEDVYVDYRRPSSVSFVRSLEEDLKRRDFTVNAFALNENAEVIDKFNGLADLDNRVLRAVGKAEERFNEDALRIMRGLRFAASLDFDIEEKTFEAMTSHAFLLEKISIERSFIEFDKLLLAPHWKKGIKALLATKAYQYLPDFQETAEEWQSFVADYAEDFRFTSSEQAWAATLLALKHDNPRSFLKKWKTSVNFQKTVQSLIEIFRFRMEREVTKQDVYHYGKDLLKEAETLRQAQRLDVDYERIAELDGQLLIHDKHEIVVNGGKLMKELGFKPGPDLGRTLRAIENAIVDGELANDEESIMAFVQAMKQV.

Positions 32 and 35 each coordinate ATP. Glycine 32 and arginine 35 together coordinate CTP. Mg(2+) is bound by residues aspartate 45 and aspartate 47. Arginine 116, aspartate 159, arginine 162, arginine 165, and arginine 168 together coordinate ATP. 5 residues coordinate CTP: arginine 116, aspartate 159, arginine 162, arginine 165, and arginine 168.

This sequence belongs to the tRNA nucleotidyltransferase/poly(A) polymerase family. Bacterial CCA-adding enzyme type 3 subfamily. In terms of assembly, homodimer. Mg(2+) is required as a cofactor.

The catalysed reaction is a tRNA precursor + 2 CTP + ATP = a tRNA with a 3' CCA end + 3 diphosphate. It carries out the reaction a tRNA with a 3' CCA end + 2 CTP + ATP = a tRNA with a 3' CCACCA end + 3 diphosphate. Catalyzes the addition and repair of the essential 3'-terminal CCA sequence in tRNAs without using a nucleic acid template. Adds these three nucleotides in the order of C, C, and A to the tRNA nucleotide-73, using CTP and ATP as substrates and producing inorganic pyrophosphate. tRNA 3'-terminal CCA addition is required both for tRNA processing and repair. Also involved in tRNA surveillance by mediating tandem CCA addition to generate a CCACCA at the 3' terminus of unstable tRNAs. While stable tRNAs receive only 3'-terminal CCA, unstable tRNAs are marked with CCACCA and rapidly degraded. This chain is CCA-adding enzyme, found in Streptococcus thermophilus (strain CNRZ 1066).